Consider the following 454-residue polypeptide: Aminodeoxychorismate synthase component 1 (454 aa).

L-tryptophan-binding positions include Ser-37, 44–47, and 241–243; these read YNRF and PFS. Glu-259 (proton donor) is an active-site residue. Catalysis depends on Lys-275, which acts as the N6-(4-deoxychorismate)-lysine intermediate.

This sequence belongs to the anthranilate synthase component I family. In terms of assembly, monomer. Heterodimer consisting of two non-identical subunits: a glutamine amidotransferase subunit (PabA) and a aminodeoxychorismate synthase subunit (PabB). It depends on Mg(2+) as a cofactor.

The enzyme catalyses chorismate + L-glutamine = 4-amino-4-deoxychorismate + L-glutamate. Its pathway is cofactor biosynthesis; tetrahydrofolate biosynthesis; 4-aminobenzoate from chorismate: step 1/2. Part of a heterodimeric complex that catalyzes the two-step biosynthesis of 4-amino-4-deoxychorismate (ADC), a precursor of p-aminobenzoate (PABA) and tetrahydrofolate. In the first step, a glutamine amidotransferase (PabA) generates ammonia as a substrate that, along with chorismate, is used in the second step, catalyzed by aminodeoxychorismate synthase (PabB) to produce ADC. The protein is Aminodeoxychorismate synthase component 1 (pabB) of Salmonella typhimurium (strain LT2 / SGSC1412 / ATCC 700720).